We begin with the raw amino-acid sequence, 455 residues long: Ribulose bisphosphate carboxylase large chain (455 aa).

Position 5 is an N6,N6,N6-trimethyllysine (Lys-5). Substrate is bound by residues Asn-114 and Thr-164. The active-site Proton acceptor is Lys-166. Lys-168 serves as a coordination point for substrate. Lys-192, Asp-194, and Glu-195 together coordinate Mg(2+). Lys-192 is subject to N6-carboxylysine. The active-site Proton acceptor is His-285. Arg-286, His-318, and Ser-370 together coordinate substrate.

This sequence belongs to the RuBisCO large chain family. Type I subfamily. In terms of assembly, heterohexadecamer of 8 large chains and 8 small chains; disulfide-linked. The disulfide link is formed within the large subunit homodimers. Requires Mg(2+) as cofactor. The disulfide bond which can form in the large chain dimeric partners within the hexadecamer appears to be associated with oxidative stress and protein turnover.

The protein localises to the plastid. It localises to the chloroplast. It catalyses the reaction 2 (2R)-3-phosphoglycerate + 2 H(+) = D-ribulose 1,5-bisphosphate + CO2 + H2O. It carries out the reaction D-ribulose 1,5-bisphosphate + O2 = 2-phosphoglycolate + (2R)-3-phosphoglycerate + 2 H(+). RuBisCO catalyzes two reactions: the carboxylation of D-ribulose 1,5-bisphosphate, the primary event in carbon dioxide fixation, as well as the oxidative fragmentation of the pentose substrate in the photorespiration process. Both reactions occur simultaneously and in competition at the same active site. This is Ribulose bisphosphate carboxylase large chain from Erythrina crista-galli (Cockspur coral tree).